Reading from the N-terminus, the 327-residue chain is Probable cell division protein WhiA (327 aa).

The H-T-H motif DNA-binding region spans 275-308 (SLEELGQLADPPMTKDAVAGRIRRLLSMADRKAK). The tract at residues 306–327 (KAKETGIPDTESAVTADLLDDA) is disordered.

The protein belongs to the WhiA family.

Its function is as follows. Involved in cell division and chromosome segregation. The polypeptide is Probable cell division protein WhiA (Rhodococcus jostii (strain RHA1)).